A 429-amino-acid chain; its full sequence is UDP-N-acetylglucosamine 1-carboxyvinyltransferase (429 aa).

22–23 (KN) is a binding site for phosphoenolpyruvate. Residue arginine 102 coordinates UDP-N-acetyl-alpha-D-glucosamine. The active-site Proton donor is the cysteine 126. Cysteine 126 carries the 2-(S-cysteinyl)pyruvic acid O-phosphothioketal modification. UDP-N-acetyl-alpha-D-glucosamine is bound by residues 131 to 135 (RPVDL), aspartate 316, and isoleucine 338.

The protein belongs to the EPSP synthase family. MurA subfamily.

Its subcellular location is the cytoplasm. It carries out the reaction phosphoenolpyruvate + UDP-N-acetyl-alpha-D-glucosamine = UDP-N-acetyl-3-O-(1-carboxyvinyl)-alpha-D-glucosamine + phosphate. It functions in the pathway cell wall biogenesis; peptidoglycan biosynthesis. Functionally, cell wall formation. Adds enolpyruvyl to UDP-N-acetylglucosamine. This is UDP-N-acetylglucosamine 1-carboxyvinyltransferase from Methylocella silvestris (strain DSM 15510 / CIP 108128 / LMG 27833 / NCIMB 13906 / BL2).